Reading from the N-terminus, the 85-residue chain is Small ribosomal subunit protein uS17 (85 aa).

It belongs to the universal ribosomal protein uS17 family. In terms of assembly, part of the 30S ribosomal subunit.

Its function is as follows. One of the primary rRNA binding proteins, it binds specifically to the 5'-end of 16S ribosomal RNA. This chain is Small ribosomal subunit protein uS17, found in Desulforudis audaxviator (strain MP104C).